We begin with the raw amino-acid sequence, 357 residues long: UDP-N-acetylglucosamine--N-acetylmuramyl-(pentapeptide) pyrophosphoryl-undecaprenol N-acetylglucosamine transferase (357 aa).

UDP-N-acetyl-alpha-D-glucosamine contacts are provided by residues 14–16 (TGG), asparagine 128, arginine 169, serine 193, isoleucine 248, and glutamine 292.

Belongs to the glycosyltransferase 28 family. MurG subfamily.

The protein resides in the cell inner membrane. The catalysed reaction is di-trans,octa-cis-undecaprenyl diphospho-N-acetyl-alpha-D-muramoyl-L-alanyl-D-glutamyl-meso-2,6-diaminopimeloyl-D-alanyl-D-alanine + UDP-N-acetyl-alpha-D-glucosamine = di-trans,octa-cis-undecaprenyl diphospho-[N-acetyl-alpha-D-glucosaminyl-(1-&gt;4)]-N-acetyl-alpha-D-muramoyl-L-alanyl-D-glutamyl-meso-2,6-diaminopimeloyl-D-alanyl-D-alanine + UDP + H(+). It participates in cell wall biogenesis; peptidoglycan biosynthesis. In terms of biological role, cell wall formation. Catalyzes the transfer of a GlcNAc subunit on undecaprenyl-pyrophosphoryl-MurNAc-pentapeptide (lipid intermediate I) to form undecaprenyl-pyrophosphoryl-MurNAc-(pentapeptide)GlcNAc (lipid intermediate II). This chain is UDP-N-acetylglucosamine--N-acetylmuramyl-(pentapeptide) pyrophosphoryl-undecaprenol N-acetylglucosamine transferase, found in Bdellovibrio bacteriovorus (strain ATCC 15356 / DSM 50701 / NCIMB 9529 / HD100).